Here is a 262-residue protein sequence, read N- to C-terminus: Hydroxyethylthiazole kinase (262 aa).

Met-50 contributes to the substrate binding site. Arg-125 and Thr-171 together coordinate ATP. Gly-198 provides a ligand contact to substrate.

This sequence belongs to the Thz kinase family. The cofactor is Mg(2+).

The catalysed reaction is 5-(2-hydroxyethyl)-4-methylthiazole + ATP = 4-methyl-5-(2-phosphooxyethyl)-thiazole + ADP + H(+). Its pathway is cofactor biosynthesis; thiamine diphosphate biosynthesis; 4-methyl-5-(2-phosphoethyl)-thiazole from 5-(2-hydroxyethyl)-4-methylthiazole: step 1/1. Its function is as follows. Catalyzes the phosphorylation of the hydroxyl group of 4-methyl-5-beta-hydroxyethylthiazole (THZ). The polypeptide is Hydroxyethylthiazole kinase (Escherichia coli O81 (strain ED1a)).